We begin with the raw amino-acid sequence, 331 residues long: D-alanine--D-alanine ligase (331 aa).

An ATP-grasp domain is found at 116–316 (KRQWQTHGLP…YEDFVLQLAA (201 aa)). 142–197 (ADRLGLPLIVKPAREGSSIGLTKVTSVAELPAAYEKAARLDRDVMAEQFIEGDELT) contributes to the ATP binding site. The Mg(2+) site is built by Asp-269, Glu-283, and Asn-285.

Belongs to the D-alanine--D-alanine ligase family. The cofactor is Mg(2+). Requires Mn(2+) as cofactor.

It localises to the cytoplasm. The enzyme catalyses 2 D-alanine + ATP = D-alanyl-D-alanine + ADP + phosphate + H(+). It participates in cell wall biogenesis; peptidoglycan biosynthesis. Its function is as follows. Cell wall formation. This chain is D-alanine--D-alanine ligase, found in Ralstonia pickettii (strain 12J).